The primary structure comprises 202 residues: MNPEYDYLFKLLLIGDSGVGKSCLLLRFADDSYLESYISTIGVDFKIRTVEQDGKTIKLQIWDTAGQERFRTITSSYYRGAHGIIVVYDVTDQESFNNVKQWLNEIDRYASENVNKLLVGNKCDLAENRVVSYEAGKALADEIGIPFLETSAKDATNVEKAFMTMAGEIKNRMASQPATNASKPATVQMRGQPVAQQSSCCS.

GTP is bound by residues 15-23, 33-40, 63-67, 121-124, and 151-153; these read GDSGVGKSC, YLESYIST, DTAGQ, NKCD, and SAK. An Effector region motif is present at residues 37–45; the sequence is YISTIGVDF. Over residues 174–185 the composition is skewed to polar residues; the sequence is ASQPATNASKPA. The tract at residues 174 to 202 is disordered; it reads ASQPATNASKPATVQMRGQPVAQQSSCCS. S-geranylgeranyl cysteine attachment occurs at residues cysteine 200 and cysteine 201.

It belongs to the small GTPase superfamily. Rab family.

The protein resides in the cell membrane. Its function is as follows. Possesses GTPase activity. The chain is Ras-related protein RIC1 (RIC1) from Oryza sativa subsp. japonica (Rice).